We begin with the raw amino-acid sequence, 157 residues long: MSQVILDLQLACENHAGLPDEAQFQRWLDGVIPQFQEEAEVTIRLVDETESHDLNLTYRGKDKPTNVLSFPFEAPPGIEMPLLGDLIICRQVVEQEAQEQSKPLEAHWAHMVVHGSLHLLGYDHIDDDEAEEMESLETEIMLAMGYEDPYIAEKIAE.

Zn(2+) contacts are provided by His114, His118, and His124.

The protein belongs to the endoribonuclease YbeY family. Zn(2+) serves as cofactor.

The protein resides in the cytoplasm. Single strand-specific metallo-endoribonuclease involved in late-stage 70S ribosome quality control and in maturation of the 3' terminus of the 16S rRNA. This chain is Endoribonuclease YbeY, found in Salmonella dublin (strain CT_02021853).